The primary structure comprises 367 residues: Outer membrane protein P2 (367 aa).

The signal sequence occupies residues 1-20 (MKKTLAALIVGAFAASAANA).

The protein belongs to the Gram-negative porin family. As to quaternary structure, homotrimer.

It localises to the cell outer membrane. In terms of biological role, forms pores that allow passive diffusion of small molecules across the outer membrane. In Haemophilus influenzae, this protein is Outer membrane protein P2 (ompP2).